The sequence spans 503 residues: Cytochrome c lysine N-methyltransferase 1 (503 aa).

The 225-residue stretch at 52–276 (SKFELLRIPR…EEAQVFISYA (225 aa)) folds into the SET domain. The interval 190-291 (NYEKLISTVY…VHFEQIYGFL (102 aa)) is SET-like.

The protein belongs to the class V-like SAM-binding methyltransferase superfamily.

It localises to the cytoplasm. It is found in the cytosol. The catalysed reaction is L-lysyl-[cytochrome c] + S-adenosyl-L-methionine = N(6)-methyl-L-lysyl-[cytochrome c] + S-adenosyl-L-homocysteine + H(+). Its function is as follows. Methyltransferase which mediates trimethylation of cytochrome c (CYC1). This is Cytochrome c lysine N-methyltransferase 1 (CTM1) from Kluyveromyces lactis (strain ATCC 8585 / CBS 2359 / DSM 70799 / NBRC 1267 / NRRL Y-1140 / WM37) (Yeast).